The following is a 550-amino-acid chain: Efflux pump DEP3 (550 aa).

Residues 1–33 (MSEQSTLAGPYTEKPGVESQNPTGDGKASFDET) form a disordered region. Helical transmembrane passes span 44–64 (AIAY…NTIV), 78–98 (LELI…ILLW), 109–129 (WVYI…GAAP), 139–159 (VIAG…VSVL), 172–192 (STVV…AFAA), 199–219 (WGFY…MILF), 242–262 (AVIF…GGVV), 268–288 (GTII…IVLL), 319–339 (FLAS…FQFI), 351–371 (LLPL…LMPK), and 373–393 (GLIP…SALM). An N-linked (GlcNAc...) asparagine glycan is attached at asparagine 399. The next 3 membrane-spanning stretches (helical) occupy residues 410 to 430 (ILVG…VQSL), 439 to 459 (AVGA…AICG), and 515 to 535 (SIWA…WPLF).

It belongs to the major facilitator superfamily. TCR/Tet family.

It localises to the cell membrane. Its function is as follows. Efflux pump; part of the gene cluster that mediates the biosynthesis of depudecin, a highly oxidized eleven-carbon linear polyketide that acts as a histone deacetylase (HDAC) inhibitor and makes a small contribution to pathogenesis. Is presumed either to be responsible for exporting depudecin, to provide self-protection, or both. This is Efflux pump DEP3 from Fusarium langsethiae.